Here is a 415-residue protein sequence, read N- to C-terminus: Transfer protein TraSA (415 aa).

The 200-residue stretch at 127-326 (DGAVHYRDYR…HRVNDETSAN (200 aa)) folds into the FtsK domain. 145–152 (GATESGKS) contributes to the ATP binding site.

The chain is Transfer protein TraSA (traSA) from Streptomyces ambofaciens.